The sequence spans 139 residues: MATIAQLIRKPRQKKKVKSKSPALHYNLNLLNKKTTNVYSPLKRGVCTRVGTMTPRKPNSALRKYAKVRLTNGFEVLAYIPGEGHNLQEHSVTLLRGGRVKDLPGVRYHIVRGTLDTVGVDKRRQQRSAYGAKKPKPKS.

Positions 119 to 139 are disordered; sequence GVDKRRQQRSAYGAKKPKPKS.

It belongs to the universal ribosomal protein uS12 family. As to quaternary structure, part of the 30S ribosomal subunit. Contacts proteins S8 and S17. May interact with IF1 in the 30S initiation complex.

In terms of biological role, with S4 and S5 plays an important role in translational accuracy. Interacts with and stabilizes bases of the 16S rRNA that are involved in tRNA selection in the A site and with the mRNA backbone. Located at the interface of the 30S and 50S subunits, it traverses the body of the 30S subunit contacting proteins on the other side and probably holding the rRNA structure together. The combined cluster of proteins S8, S12 and S17 appears to hold together the shoulder and platform of the 30S subunit. The sequence is that of Small ribosomal subunit protein uS12 from Mycoplasma genitalium (strain ATCC 33530 / DSM 19775 / NCTC 10195 / G37) (Mycoplasmoides genitalium).